We begin with the raw amino-acid sequence, 249 residues long: MVEMNFKVDAFEGPLDLLLHLIGQLEVDIYDIPMAEITDQYMEFVHTMQEMELDVASEYLVMAATLLAIKSKMLLPKQELEIDYDTLEEEEDPRDALVEKLMEYKRFKEAAKELKEKEAERSFYFSKPPMDLAEYDDGTKVAELDVSLNDMLSAFNKMLRRKKLNKPLHTRITTQEISIDQRMDSVLEKLNLQVNHRLRFDELFEEQTKEQLVVTFLALLELMKRKLVEVEQAESFADLYVQGKGEEIS.

Belongs to the ScpA family. As to quaternary structure, component of a cohesin-like complex composed of ScpA, ScpB and the Smc homodimer, in which ScpA and ScpB bind to the head domain of Smc. The presence of the three proteins is required for the association of the complex with DNA.

Its subcellular location is the cytoplasm. Participates in chromosomal partition during cell division. May act via the formation of a condensin-like complex containing Smc and ScpB that pull DNA away from mid-cell into both cell halves. The chain is Segregation and condensation protein A from Listeria monocytogenes serotype 4b (strain CLIP80459).